The following is a 106-amino-acid chain: Putative toxin Rv3098A/RVBD_3098A (106 aa).

This sequence belongs to the PemK/MazF family. Forms a complex with cognate antitoxin Rv3098B/RVBD_3098B.

In terms of biological role, putative toxic component of a possible type II toxin-antitoxin (TA) system. Its toxic effect may be neutralized by cognate antitoxin Rv3098B/RVBD_3098B. In Mycobacterium tuberculosis (strain ATCC 25618 / H37Rv), this protein is Putative toxin Rv3098A/RVBD_3098A.